The sequence spans 107 residues: L-rhamnose mutarotase (107 aa).

Substrate is bound at residue Tyr-18. His-22 serves as the catalytic Proton donor. Substrate contacts are provided by residues Tyr-41 and 76 to 77 (WW).

The protein belongs to the rhamnose mutarotase family. As to quaternary structure, homodimer.

The protein localises to the cytoplasm. It catalyses the reaction alpha-L-rhamnose = beta-L-rhamnose. The protein operates within carbohydrate metabolism; L-rhamnose metabolism. Involved in the anomeric conversion of L-rhamnose. This Paraburkholderia xenovorans (strain LB400) protein is L-rhamnose mutarotase.